We begin with the raw amino-acid sequence, 128 residues long: Kinase-associated lipoprotein B (128 aa).

A signal peptide spans 1 to 25 (MSTFETGSIVKGFYKTGVYIGEITA). A lipid anchor (N-palmitoyl cysteine) is attached at cysteine 26. Cysteine 26 is lipidated: S-diacylglycerol cysteine.

The protein localises to the cell membrane. In terms of biological role, may play a role in the activation or the expression of KinB. The chain is Kinase-associated lipoprotein B (kapB) from Bacillus subtilis (strain 168).